Reading from the N-terminus, the 387-residue chain is uncharacterized protein (387 aa).

The protein belongs to the geranylgeranyl reductase family. ChlP subfamily.

This is an uncharacterized protein from Methanosarcina barkeri (strain Fusaro / DSM 804).